The primary structure comprises 401 residues: Nodal homolog 3-C (401 aa).

A signal peptide spans 1–18 (MAFLSLFLCLVFSSPLMA). Residues 19–274 (MPPALQGRKA…KVNGFRRLRR (256 aa)) constitute a propeptide that is removed on maturation. N-linked (GlcNAc...) asparagine glycans are attached at residues Asn-168, Asn-337, and Asn-344. Disulfide bonds link Cys-299/Cys-365 and Cys-328/Cys-396.

This sequence belongs to the TGF-beta family. In terms of assembly, monomer. The propeptide region interacts with bmp4 in a non-covalent manner. Expressed in the dorsal marginal region of late blastula, becoming restricted to the Spemann organizer at the early gastrula stage.

The protein localises to the secreted. Exhibits mesoderm-dorsalizing activity and neural-inducing activity, but lacks mesoderm-inducing activity. Regulates the expression of specific mesodermal and neural genes. Induces convergent extension movements at the embryonic midline by activating the fgf signaling pathway to induce t/bra expression in the organizer region. Acts with wnt11 to induce Spemann organizer cells and induce axis formation. The unprocessed protein antagonizes bmp-signaling. The protein is Nodal homolog 3-C of Xenopus tropicalis (Western clawed frog).